The chain runs to 205 residues: Holliday junction branch migration complex subunit RuvA (205 aa).

The domain I stretch occupies residues 1 to 64 (MIGKLKGIID…EDQIKLFGFR (64 aa)). Positions 65-143 (TDTEREWFRL…ALSAVDPAVV (79 aa)) are domain II. A flexible linker region spans residues 144-154 (KLSGAIDDNRA). The tract at residues 154–205 (APRAVTDAISALVNLGYGQPQAAAAVATASRTAGEDAETAQLIKLGLKELSK) is domain III.

The protein belongs to the RuvA family. Homotetramer. Forms an RuvA(8)-RuvB(12)-Holliday junction (HJ) complex. HJ DNA is sandwiched between 2 RuvA tetramers; dsDNA enters through RuvA and exits via RuvB. An RuvB hexamer assembles on each DNA strand where it exits the tetramer. Each RuvB hexamer is contacted by two RuvA subunits (via domain III) on 2 adjacent RuvB subunits; this complex drives branch migration. In the full resolvosome a probable DNA-RuvA(4)-RuvB(12)-RuvC(2) complex forms which resolves the HJ.

The protein localises to the cytoplasm. Its function is as follows. The RuvA-RuvB-RuvC complex processes Holliday junction (HJ) DNA during genetic recombination and DNA repair, while the RuvA-RuvB complex plays an important role in the rescue of blocked DNA replication forks via replication fork reversal (RFR). RuvA specifically binds to HJ cruciform DNA, conferring on it an open structure. The RuvB hexamer acts as an ATP-dependent pump, pulling dsDNA into and through the RuvAB complex. HJ branch migration allows RuvC to scan DNA until it finds its consensus sequence, where it cleaves and resolves the cruciform DNA. In Rhodopseudomonas palustris (strain TIE-1), this protein is Holliday junction branch migration complex subunit RuvA.